A 348-amino-acid chain; its full sequence is Neutral peroxidase (348 aa).

The signal sequence occupies residues 1-20 (MASFVARLTLALSFIALALA). A propeptide spanning residues 21-67 (GYSLVQNTLSSPTHTRLNLIPTWLDSTFDSADVLSYLGFGKSSGRLS) is cleaved from the precursor. Intrachain disulfides connect cysteine 71–cysteine 149, cysteine 102–cysteine 107, cysteine 156–cysteine 344, and cysteine 235–cysteine 256. Histidine 100 acts as the Proton acceptor in catalysis. 4 residues coordinate Ca(2+): aspartate 101, valine 104, glycine 106, and aspartate 108. Asparagine 114, asparagine 118, asparagine 173, asparagine 177, and asparagine 189 each carry an N-linked (GlcNAc...) asparagine glycan. Position 198 (proline 198) interacts with substrate. An N-linked (GlcNAc...) asparagine glycan is attached at asparagine 203. Histidine 228 serves as a coordination point for heme b. Ca(2+) is bound at residue threonine 229. 2 N-linked (GlcNAc...) asparagine glycosylation sites follow: asparagine 247 and asparagine 261. 3 residues coordinate Ca(2+): aspartate 269, serine 271, and aspartate 276. N-linked (GlcNAc...) asparagine glycosylation occurs at asparagine 300.

This sequence belongs to the peroxidase family. Classical plant (class III) peroxidase subfamily. It depends on Ca(2+) as a cofactor. Requires heme b as cofactor. In terms of tissue distribution, highly expressed in suspension cultured cells. Weak expression also found in the stems of intact plants. No expression in leaf, tuberous root and non-tuberous root.

It localises to the secreted. It catalyses the reaction 2 a phenolic donor + H2O2 = 2 a phenolic radical donor + 2 H2O. In terms of biological role, removal of H(2)O(2), oxidation of toxic reductants, biosynthesis and degradation of lignin, suberization, auxin catabolism, response to environmental stresses such as wounding, pathogen attack and oxidative stress. These functions might be dependent on each isozyme/isoform in each plant tissue. May contribute to protection against cold-induced oxidative stress. The protein is Neutral peroxidase of Ipomoea batatas (Sweet potato).